A 67-amino-acid polypeptide reads, in one-letter code: uncharacterized protein (67 aa).

The next 2 helical transmembrane spans lie at 10-30 (EFFI…IIMW) and 40-60 (LMVG…WMVF).

It belongs to the plectrovirus ORF10 family.

The protein resides in the host membrane. This is an uncharacterized protein from Spiroplasma melliferum (SpV1).